The chain runs to 200 residues: Phospholipase A2 inhibitor 1 (200 aa).

A signal peptide spans 1–19 (MKSLHIICLLFIFVARGNS). Cystine bridges form between Cys-22-Cys-46, Cys-25-Cys-32, Cys-39-Cys-67, Cys-73-Cys-94, Cys-95-Cys-100, Cys-118-Cys-143, Cys-136-Cys-165, and Cys-169-Cys-191. Asn-176 is a glycosylation site (N-linked (GlcNAc...) asparagine).

The protein belongs to the CNF-like-inhibitor family. As to quaternary structure, occurs as a mixture of oligomers. Tetrameric arrangement appears to be the predominant quaternary structure. Post-translationally, N-glycosylated. As to expression, expressed by the liver.

It is found in the secreted. Functionally, inhibits basic phospholipase A2 isozymes PLA-B, BP-I and BP-II. This is Phospholipase A2 inhibitor 1 from Protobothrops flavoviridis (Habu).